The primary structure comprises 342 residues: GTPase Obg (342 aa).

An Obg domain is found at 1-159; sequence MQFIDRAEIE…RNLRLELKLL (159 aa). The OBG-type G domain maps to 160–328; sequence AEVGIIGLPN…LLQAIWHRLD (169 aa). GTP-binding positions include 166 to 173, 191 to 195, 213 to 216, 280 to 283, and 309 to 311; these read GLPNAGKS, FTTLV, DIPG, NKVD, and SAV. Mg(2+) is bound by residues Ser173 and Thr193.

This sequence belongs to the TRAFAC class OBG-HflX-like GTPase superfamily. OBG GTPase family. In terms of assembly, monomer. Mg(2+) is required as a cofactor.

It localises to the cytoplasm. Functionally, an essential GTPase which binds GTP, GDP and possibly (p)ppGpp with moderate affinity, with high nucleotide exchange rates and a fairly low GTP hydrolysis rate. Plays a role in control of the cell cycle, stress response, ribosome biogenesis and in those bacteria that undergo differentiation, in morphogenesis control. The protein is GTPase Obg of Crocosphaera subtropica (strain ATCC 51142 / BH68) (Cyanothece sp. (strain ATCC 51142)).